The primary structure comprises 639 residues: Threonine--tRNA ligase (639 aa).

The 61-residue stretch at 1 to 61 folds into the TGS domain; that stretch reads MIHITLPDGS…TQDSPLSIVT (61 aa). Residues 242 to 533 form a catalytic region; it reads DHRKLGRELD…LIEEHAGALP (292 aa). Zn(2+)-binding residues include Cys-333, His-384, and His-510.

This sequence belongs to the class-II aminoacyl-tRNA synthetase family. In terms of assembly, homodimer. The cofactor is Zn(2+).

The protein resides in the cytoplasm. It carries out the reaction tRNA(Thr) + L-threonine + ATP = L-threonyl-tRNA(Thr) + AMP + diphosphate + H(+). Catalyzes the attachment of threonine to tRNA(Thr) in a two-step reaction: L-threonine is first activated by ATP to form Thr-AMP and then transferred to the acceptor end of tRNA(Thr). Also edits incorrectly charged L-seryl-tRNA(Thr). The protein is Threonine--tRNA ligase of Acidovorax ebreus (strain TPSY) (Diaphorobacter sp. (strain TPSY)).